The primary structure comprises 955 residues: 2-oxoglutarate dehydrogenase E1 component (955 aa).

Belongs to the alpha-ketoglutarate dehydrogenase family. As to quaternary structure, homodimer. Part of the 2-oxoglutarate dehydrogenase (OGDH) complex composed of E1 (2-oxoglutarate dehydrogenase), E2 (dihydrolipoamide succinyltransferase) and E3 (dihydrolipoamide dehydrogenase); the complex contains multiple copies of the three enzymatic components (E1, E2 and E3). Thiamine diphosphate serves as cofactor.

It catalyses the reaction N(6)-[(R)-lipoyl]-L-lysyl-[protein] + 2-oxoglutarate + H(+) = N(6)-[(R)-S(8)-succinyldihydrolipoyl]-L-lysyl-[protein] + CO2. Functionally, E1 component of the 2-oxoglutarate dehydrogenase (OGDH) complex which catalyzes the decarboxylation of 2-oxoglutarate, the first step in the conversion of 2-oxoglutarate to succinyl-CoA and CO(2). The chain is 2-oxoglutarate dehydrogenase E1 component from Bacillus cereus (strain 03BB102).